The primary structure comprises 97 residues: Prophage lipoprotein Bor homolog (97 aa).

Positions Met-1–Gly-16 are cleaved as a signal peptide. The N-palmitoyl cysteine moiety is linked to residue Cys-17. A lipid anchor (S-diacylglycerol cysteine) is attached at Cys-17.

It belongs to the lambda phage bor family.

Its subcellular location is the cell membrane. The chain is Prophage lipoprotein Bor homolog (borD) from Escherichia coli (strain K12).